Consider the following 117-residue polypeptide: Hemerythrin subunit alpha (117 aa).

Fe cation is bound by residues H24, H53, E57, H72, H76, H105, and D110.

Belongs to the hemerythrin family. Octamer composed of two types of chains: alpha and beta.

Hemerythrin is a respiratory protein in blood cells of certain marine worms. The oxygen-binding site in each chain contains two iron atoms. This Lingula reevii (Inarticulated brachiopod) protein is Hemerythrin subunit alpha.